The following is a 273-amino-acid chain: Dermonecrotic toxin LruSicTox-alphaIC1d (273 aa).

His-5 is an active-site residue. 2 residues coordinate Mg(2+): Glu-25 and Asp-27. The Nucleophile role is filled by His-41. Intrachain disulfides connect Cys-45/Cys-51 and Cys-47/Cys-190. Asp-85 contacts Mg(2+).

The protein belongs to the arthropod phospholipase D family. Class II subfamily. It depends on Mg(2+) as a cofactor. Expressed by the venom gland.

The protein localises to the secreted. The enzyme catalyses an N-(acyl)-sphingosylphosphocholine = an N-(acyl)-sphingosyl-1,3-cyclic phosphate + choline. It carries out the reaction an N-(acyl)-sphingosylphosphoethanolamine = an N-(acyl)-sphingosyl-1,3-cyclic phosphate + ethanolamine. It catalyses the reaction a 1-acyl-sn-glycero-3-phosphocholine = a 1-acyl-sn-glycero-2,3-cyclic phosphate + choline. The catalysed reaction is a 1-acyl-sn-glycero-3-phosphoethanolamine = a 1-acyl-sn-glycero-2,3-cyclic phosphate + ethanolamine. Its function is as follows. Dermonecrotic toxins cleave the phosphodiester linkage between the phosphate and headgroup of certain phospholipids (sphingolipid and lysolipid substrates), forming an alcohol (often choline) and a cyclic phosphate. This toxin acts on sphingomyelin (SM). It may also act on ceramide phosphoethanolamine (CPE), lysophosphatidylcholine (LPC) and lysophosphatidylethanolamine (LPE), but not on lysophosphatidylserine (LPS), and lysophosphatidylglycerol (LPG). It acts by transphosphatidylation, releasing exclusively cyclic phosphate products as second products. Induces dermonecrosis, hemolysis, increased vascular permeability, edema, inflammatory response, and platelet aggregation. This Loxosceles rufescens (Mediterranean recluse spider) protein is Dermonecrotic toxin LruSicTox-alphaIC1d.